The primary structure comprises 442 residues: HTH-type transcriptional regulator NorG (442 aa).

The HTH gntR-type domain maps to 2–46; it reads KIPSHRQLAIQYNVNRVTIIKSIELLEAEGFIYTKVGSGTYVNDY. Positions 6–25 form a DNA-binding region, H-T-H motif; sequence HRQLAIQYNVNRVTIIKSIE. Lys-288 carries the post-translational modification N6-(pyridoxal phosphate)lysine.

This sequence in the C-terminal section; belongs to the class-I pyridoxal-phosphate-dependent aminotransferase family. Requires pyridoxal 5'-phosphate as cofactor.

Functionally, positively regulates the expression of the NorB efflux pump and negatively regulates the expression of the AbcA efflux pump. Binds specifically to the promoters of norA, norB and norC and abcA genes. Could also have an aminotransferase activity. This chain is HTH-type transcriptional regulator NorG (norG), found in Staphylococcus aureus (strain USA300).